A 307-amino-acid polypeptide reads, in one-letter code: Ribosomal RNA small subunit methyltransferase H (307 aa).

S-adenosyl-L-methionine contacts are provided by residues 32–34, aspartate 52, phenylalanine 78, aspartate 99, and glutamine 106; that span reads GGH. The interval 287-307 is disordered; sequence KEEIESNKRSHSAKLRVAEKV.

The protein belongs to the methyltransferase superfamily. RsmH family.

It localises to the cytoplasm. It carries out the reaction cytidine(1402) in 16S rRNA + S-adenosyl-L-methionine = N(4)-methylcytidine(1402) in 16S rRNA + S-adenosyl-L-homocysteine + H(+). Specifically methylates the N4 position of cytidine in position 1402 (C1402) of 16S rRNA. The sequence is that of Ribosomal RNA small subunit methyltransferase H from Caldicellulosiruptor bescii (strain ATCC BAA-1888 / DSM 6725 / KCTC 15123 / Z-1320) (Anaerocellum thermophilum).